A 296-amino-acid polypeptide reads, in one-letter code: Transcription factor MYB72 (296 aa).

HTH myb-type domains follow at residues 11-63 and 64-118; these read KNKV…INYL and RPDV…KKRL. 2 consecutive DNA-binding regions (H-T-H motif) follow at residues 39–63 and 91–114; these read WRSL…INYL and WSKI…NTHL. A disordered region spans residues 118-144; the sequence is LTPSSSSSSLSSTHDQSTKADHDKNCD. Basic and acidic residues predominate over residues 133–144; the sequence is QSTKADHDKNCD.

As to quaternary structure, interacts with EIL3.

It is found in the nucleus. Its function is as follows. Involved in metal ions homeostasis, including iron ions (Fe) acquisition, via the regulation of NAS4 and NAS2 genes expression. Necessary for plant survival in alkaline soil where iron availability is greatly restricted. Involved in the up-regulation of several biosynthesis genes of secondary metabolites involved in iron uptake under conditions of iron deficiency. Triggers tolerance to nickel (Ni) and zinc (Zn) ions. Required in the roots during early signaling steps of rhizobacteria-mediated (e.g. P.fluorescens WCS417r) and beneficial fungi-mediated (e.g. T.asperellum T34) broad-spectrum induced systemic resistance (ISR) against several pathogens (e.g. P.syringae pv tomato, H.parasitica, P.cucumerina, A.brassicicola and B.cinerea) and implying enhanced callose deposition. Required for the induction of some genes (e.g. BGLU42) upon rhizobacteria-mediated ISR. In Arabidopsis thaliana (Mouse-ear cress), this protein is Transcription factor MYB72.